The sequence spans 501 residues: Glycerol kinase (501 aa).

Residue Thr-17 participates in ADP binding. The ATP site is built by Thr-17, Thr-18, and Ser-19. Thr-17 is a sn-glycerol 3-phosphate binding site. Arg-21 contributes to the ADP binding site. Sn-glycerol 3-phosphate-binding residues include Arg-87, Glu-88, Tyr-139, and Asp-243. The glycerol site is built by Arg-87, Glu-88, Tyr-139, Asp-243, and Gln-244. The ADP site is built by Thr-265 and Gly-308. Positions 265, 308, 312, and 409 each coordinate ATP. Gly-409 and Asn-413 together coordinate ADP.

The protein belongs to the FGGY kinase family.

The enzyme catalyses glycerol + ATP = sn-glycerol 3-phosphate + ADP + H(+). It functions in the pathway polyol metabolism; glycerol degradation via glycerol kinase pathway; sn-glycerol 3-phosphate from glycerol: step 1/1. Its activity is regulated as follows. Inhibited by fructose 1,6-bisphosphate (FBP). Functionally, key enzyme in the regulation of glycerol uptake and metabolism. Catalyzes the phosphorylation of glycerol to yield sn-glycerol 3-phosphate. This Pseudomonas fluorescens (strain ATCC BAA-477 / NRRL B-23932 / Pf-5) protein is Glycerol kinase.